The primary structure comprises 1012 residues: Centriole and centriolar satellite protein OFD1 (1012 aa).

The LisH domain occupies 70–102 (LIGASNSLVADHLQRCGYEYSLSVFFPESGLAK). Coiled-coil stretches lie at residues 189–557 (QRIK…ENEV) and 622–662 (DSDL…NSAK). The segment at 609–665 (TNYPTAWVEGSSPDSDLEFVANTKARVKELQQEAERLEKAFRSYHRRVIKNSAKSPL) is mediates homooligomerization. Residues 615-1012 (WVEGSSPDSD…FSHEELDDSW (398 aa)) are mediates the interaction with SDCCAG8. A phosphoserine mark is found at serine 663, serine 669, serine 686, and serine 720. The disordered stretch occupies residues 719–744 (GSAASRLRGGTSSRRLSSTPLPKAKR). Over residues 720–737 (SAASRLRGGTSSRRLSST) the composition is skewed to low complexity. Serine 735 is modified (phosphoserine; by PKA). 4 positions are modified to phosphoserine: serine 745, serine 774, serine 789, and serine 811. Residues 757 to 794 (RSHIASPSPCPDRMPLPSPTESRHSLSIPPVSSPPEQK) are disordered. Over residues 764-774 (SPCPDRMPLPS) the composition is skewed to pro residues. 2 disordered regions span residues 824–904 (FESS…LQEV) and 963–1012 (KIIQ…DDSW). Positions 867–956 (SVDQKQIEEQ…IKDKSAHSEN (90 aa)) form a coiled coil. Basic and acidic residues-rich tracts occupy residues 871–904 (KQIE…LQEV) and 973–982 (SADKSSKKMV).

This sequence belongs to the OFD1 family. Homooligomer. Interacts with LCA5. Interacts with RUVBL1; the interaction is direct and may mediate interaction with the NuA4 histone acetyltransferase complex. Interacts with SDCCAG8; the interaction is direct. Interacts with MAP1LC3B. Interacts with C2CD3; OFD1 may act as a negative regulator of C2CD3. Forms a complex with KIAA0753/OFIP and CEP20/FOR20; the interaction with CEP20 is detected only in the presence of KIAA0753. Interacts with PCM1; this interaction may be mediated by KIAA0753/OFIP. Interacts with TBC1D31; regulates OFD1 activity in cilium assembly. Post-translationally, phosphorylated. Phosphorylation at Ser-735, by the cAMP-dependent protein kinase PKA, triggers ubiquitination and proteasomal degradation of OFD1. Also increases its interaction with TBC1D31 and regulates its function in ciliogenesis. Ubiquitinated by PJA2, upon phosphorylation at Ser-735 by PKA, leads to the proteasomal degradation of OFD1. As to expression, widely expressed. Expressed in 9 and 14 weeks old embryos in metanephric mesenchyme, oral mucosa, lung, heart, nasal and cranial cartilage, and brain. Expressed in metanephros, brain, tongue, and limb.

The protein resides in the cytoplasm. Its subcellular location is the cytoskeleton. It is found in the microtubule organizing center. It localises to the centrosome. The protein localises to the centriole. The protein resides in the cilium basal body. Its subcellular location is the nucleus. It is found in the centriolar satellite. Component of the centrioles controlling mother and daughter centrioles length. Recruits to the centriole IFT88 and centriole distal appendage-specific proteins including CEP164. Involved in the biogenesis of the cilium, a centriole-associated function. The cilium is a cell surface projection found in many vertebrate cells required to transduce signals important for development and tissue homeostasis. Plays an important role in development by regulating Wnt signaling and the specification of the left-right axis. Only OFD1 localized at the centriolar satellites is removed by autophagy, which is an important step in the ciliogenesis regulation. The polypeptide is Centriole and centriolar satellite protein OFD1 (OFD1) (Homo sapiens (Human)).